Here is a 320-residue protein sequence, read N- to C-terminus: Cytochrome c biogenesis protein CcsA (320 aa).

8 consecutive transmembrane segments (helical) span residues 9-29 (ILIHISFSVVSIVITIYFLTL), 44-64 (GMIVTFFCITGLLAARWIYSG), 71-91 (LYESLIFLSWSFSIIHMVCYF), 99-119 (LNAITGPSAILTQGFATSGLL), 144-164 (MVLGYAALLCGSLLSVALLVI), 226-246 (IISLGFIFLTIGILSGAVWAN), 261-281 (WAFITWTIFAIYLHIRTNINL), and 287-307 (AIVASMGFLIIWICYFGVNLL).

Belongs to the CcmF/CycK/Ccl1/NrfE/CcsA family. In terms of assembly, may interact with Ccs1.

The protein resides in the plastid. Its subcellular location is the chloroplast thylakoid membrane. Functionally, required during biogenesis of c-type cytochromes (cytochrome c6 and cytochrome f) at the step of heme attachment. The polypeptide is Cytochrome c biogenesis protein CcsA (Carica papaya (Papaya)).